The primary structure comprises 430 residues: 3-phosphoshikimate 1-carboxyvinyltransferase (430 aa).

3-phosphoshikimate contacts are provided by Lys-23, Ser-24, and Arg-28. Lys-23 provides a ligand contact to phosphoenolpyruvate. Residues Gly-93 and Arg-121 each coordinate phosphoenolpyruvate. Positions 166, 168, 313, and 340 each coordinate 3-phosphoshikimate. Gln-168 serves as a coordination point for phosphoenolpyruvate. Asp-313 acts as the Proton acceptor in catalysis. Arg-344 and Arg-386 together coordinate phosphoenolpyruvate.

Belongs to the EPSP synthase family. In terms of assembly, monomer.

It localises to the cytoplasm. It catalyses the reaction 3-phosphoshikimate + phosphoenolpyruvate = 5-O-(1-carboxyvinyl)-3-phosphoshikimate + phosphate. Its pathway is metabolic intermediate biosynthesis; chorismate biosynthesis; chorismate from D-erythrose 4-phosphate and phosphoenolpyruvate: step 6/7. In terms of biological role, catalyzes the transfer of the enolpyruvyl moiety of phosphoenolpyruvate (PEP) to the 5-hydroxyl of shikimate-3-phosphate (S3P) to produce enolpyruvyl shikimate-3-phosphate and inorganic phosphate. The sequence is that of 3-phosphoshikimate 1-carboxyvinyltransferase from Anaeromyxobacter sp. (strain Fw109-5).